The sequence spans 985 residues: Regulator of telomere elongation helicase 1 homolog (985 aa).

Positions 7-303 (AGIPVHFPFE…QDMAGDEPKD (297 aa)) constitute a Helicase ATP-binding domain. ATP is bound at residue 42–49 (SPTGTGKT). [4Fe-4S] cluster is bound by residues Cys146, Cys164, Cys173, and Cys209. Positions 252-255 (DEAH) match the DEAH box motif. Thr874 is subject to Phosphothreonine.

The protein belongs to the helicase family. RAD3/XPD subfamily.

Its subcellular location is the nucleus. The enzyme catalyses ATP + H2O = ADP + phosphate + H(+). A probable ATP-dependent DNA helicase implicated in DNA repair and the maintenance of genomic stability. Acts as an anti-recombinase to counteract toxic recombination and limit crossover during meiosis. Regulates meiotic recombination and crossover homeostasis by physically dissociating strand invasion events and thereby promotes noncrossover repair by meiotic synthesis dependent strand annealing (SDSA) as well as disassembly of D loop recombination intermediates. The polypeptide is Regulator of telomere elongation helicase 1 homolog (Drosophila erecta (Fruit fly)).